The sequence spans 435 residues: GTPase Obg (435 aa).

In terms of domain architecture, Obg spans 6–164 (ADFVDRVKIF…RWLELELKIL (159 aa)). The OBG-type G domain occupies 165–335 (ADVGLVGYPN…LVSKLASIVR (171 aa)). Residues 171 to 178 (GYPNVGKS), 196 to 200 (FTTLI), 217 to 220 (DIPG), 287 to 290 (NKID), and 316 to 318 (SAL) contribute to the GTP site. The Mg(2+) site is built by Ser178 and Thr198. Positions 357–435 (RRLPEKFHLE…IGDFEFEYRE (79 aa)) constitute an OCT domain.

It belongs to the TRAFAC class OBG-HflX-like GTPase superfamily. OBG GTPase family. As to quaternary structure, monomer. Requires Mg(2+) as cofactor.

Its subcellular location is the cytoplasm. In terms of biological role, an essential GTPase which binds GTP, GDP and possibly (p)ppGpp with moderate affinity, with high nucleotide exchange rates and a fairly low GTP hydrolysis rate. Plays a role in control of the cell cycle, stress response, ribosome biogenesis and in those bacteria that undergo differentiation, in morphogenesis control. The polypeptide is GTPase Obg (Thermotoga sp. (strain RQ2)).